The sequence spans 381 residues: Creatine kinase M-type (381 aa).

Positions 11-98 constitute a Phosphagen kinase N-terminal domain; the sequence is KLNYKPEEEY…FDPIISDRHG (88 aa). The Phosphagen kinase C-terminal domain occupies 125-367; that stretch reads YVLSSRVRTG…KLMVEMEKKL (243 aa). 128 to 132 serves as a coordination point for ATP; sequence SSRVR. A Phosphoserine modification is found at Ser164. Thr166 carries the post-translational modification Phosphothreonine. Ser178 carries the phosphoserine modification. Thr180 carries the post-translational modification Phosphothreonine. Residue His191 participates in ATP binding. Position 199 is a phosphoserine (Ser199). ATP contacts are provided by Arg236 and Arg292. Phosphothreonine is present on residues Thr313 and Thr322. Residues 320–325 and Asp335 contribute to the ATP site; that span reads RGTGGV. At Ser372 the chain carries Phosphoserine.

The protein belongs to the ATP:guanido phosphotransferase family. As to quaternary structure, dimer of identical or non-identical chains, which can be either B (brain type) or M (muscle type). With MM being the major form in skeletal muscle and myocardium, MB existing in myocardium, and BB existing in many tissues, especially brain.

The protein resides in the cytoplasm. It catalyses the reaction creatine + ATP = N-phosphocreatine + ADP + H(+). Its function is as follows. Reversibly catalyzes the transfer of phosphate between ATP and various phosphogens (e.g. creatine phosphate). Creatine kinase isoenzymes play a central role in energy transduction in tissues with large, fluctuating energy demands, such as skeletal muscle, heart, brain and spermatozoa. In Homo sapiens (Human), this protein is Creatine kinase M-type (CKM).